Here is a 906-residue protein sequence, read N- to C-terminus: Coatomer subunit beta' (906 aa).

WD repeat units follow at residues 13–52 (ARSD…LVKT), 55–94 (VCDL…RVHM), 97–136 (AHSD…SCSQ), 140–180 (GHTH…PNFT), 183–224 (GHEK…CVQT), 227–266 (GHAQ…LEST), 350–388 (SCEI…NKSF), and 390–425 (SAQE…KSFK). K627 bears the N6-acetyllysine mark. A WD 9 repeat occupies 746 to 783 (IRTGRLPEAAFLARTYLPSQVSRVVKLWRENLSKVNQK). Residues 837 to 862 (EEAKGFQPSRSTAQQELDGKPASPTP) are disordered. S859 carries the post-translational modification Phosphoserine. The residue at position 861 (T861) is a Phosphothreonine. Residues 866-890 (ASHTANKEEKSLLELEVDLDNLELE) are a coiled coil.

The protein belongs to the WD repeat COPB2 family. As to quaternary structure, oligomeric complex that consists of at least the alpha, beta, beta', gamma, delta, epsilon and zeta subunits. Probably interacts with PEX11A. Interacts with SCYL1. Interacts with JAGN1.

The protein localises to the cytoplasm. It localises to the cytosol. It is found in the golgi apparatus membrane. Its subcellular location is the cytoplasmic vesicle. The protein resides in the COPI-coated vesicle membrane. Its function is as follows. The coatomer is a cytosolic protein complex that binds to dilysine motifs and reversibly associates with Golgi non-clathrin-coated vesicles, which further mediate biosynthetic protein transport from the ER, via the Golgi up to the trans Golgi network. Coatomer complex is required for budding from Golgi membranes, and is essential for the retrograde Golgi-to-ER transport of dilysine-tagged proteins. In mammals, the coatomer can only be recruited by membranes associated to ADP-ribosylation factors (ARFs), which are small GTP-binding proteins; the complex also influences the Golgi structural integrity, as well as the processing, activity, and endocytic recycling of LDL receptors. This coatomer complex protein, essential for Golgi budding and vesicular trafficking, is a selective binding protein (RACK) for protein kinase C, epsilon type. It binds to Golgi membranes in a GTP-dependent manner. In Macaca fascicularis (Crab-eating macaque), this protein is Coatomer subunit beta' (COPB2).